Here is a 1263-residue protein sequence, read N- to C-terminus: MELPKEIEEYFEMLQREIDKAYEIAKKARSQGKDPSTDVEIPQATDMAGRVESLVGPPGVAQRIRELLKEYDKEIVALKIVDEIIEGKFGDFGSKEKYAEQAVRTALAILTEGIVSAPLEGIADVKIKRNTWADNSEYLALYYAGPIRSSGGTAQALSVLVGDYVRRKLGLDRFKPSGKHIERMVEEVDLYHRAVSRLQYHPSPDEVRLAMRNIPIEITGEATDDVEVSHRDVEGVETNQLRGGAILVLAEGVLQKAKKLVKYIDKMGIDGWEWLKEFVEAKEKGEEIEESESKAEESKVETRVEVEKGFYYKLYEKFRAEIAPSEKYAKEIIGGRPLFAGPSENGGFRLRYGRSRVSGFATWSINPATMVLVDEFLAIGTQMKTERPGKGAVVTPATTAEGPIVKLKDGSVVRVDDYNLALKIRDEVEEILYLGDAIIAFGDFVENNQTLLPANYVEEWWIQEFVKAVNEAYEVELRPFEENPRESVEEAAEYLEVDPEFLAKMLYDPLRVKPPVELAIHFSEILEIPLHPYYTLYWNTVNPKDVERLWGVLKDKATIEWGTFRGIKFAKKIEISLDDLGSLKRTLELLGLPHTVREGIVVVDYPWSAALLTPLGNLEWEFKAKPFYTVIDIINENNQIKLRDRGISWIGARMGRPEKAKERKMKPPVQVLFPIGLAGGSSRDIKKAAEEGKIAEVEIAFFKCPKCGHVGPETLCPECGIRKELIWTCPKCGAEYTNSQAEGYSYSCPKCNVKLKPFTKRKIKPSELLNRAMENVKVYGVDKLKGVMGMTSGWKIAEPLEKGLLRAKNEVYVFKDGTIRFDATDAPITHFRPREIGVSVEKLRELGYTHDFEGKPLVSEDQIVELKPQDVILSKEAGKYLLRVARFVDDLLEKFYGLPRFYNAEKMEDLIGHLVIGLAPHTSAGIVGRIIGFVDALVGYAHPYFHAAKRRNCDGDEDSVMLLLDALLNFSRYYLPEKRGGKMDAPLVITTRLDPREVDSEVHNMDVVRYYPLEFYEATYELKSPKELVGVIERVEDRLGKPEMYYGIKFTHDTDDIALGPKMSLYKQLGDMEEKVKRQLTLAERIRAVDQHYVAETILNSHLIPDLRGNLRSFTRQEFRCVKCNTKYRRPPLDGKCPVCGGKIVLTVSKGAIEKYLGTAKMLVANYNVKPYTRQRICLTEKDIDSLFEYLFPEAQLTLIVDPNDICMKMIKERTGETVQGGLLENFNSSGNNGKKIEKKEKKAKEKPKKKKVISLDDFFSKR.

A disordered region spans residues 1224 to 1250 (LENFNSSGNNGKKIEKKEKKAKEKPKK). The span at 1235–1244 (KKIEKKEKKA) shows a compositional bias: basic and acidic residues.

Belongs to the archaeal DNA polymerase II family. As to quaternary structure, heterodimer of a large subunit and a small subunit.

It carries out the reaction DNA(n) + a 2'-deoxyribonucleoside 5'-triphosphate = DNA(n+1) + diphosphate. The enzyme catalyses Exonucleolytic cleavage in the 3'- to 5'-direction to yield nucleoside 5'-phosphates.. Possesses two activities: a DNA synthesis (polymerase) and an exonucleolytic activity that degrades single-stranded DNA in the 3'- to 5'-direction. Has a template-primer preference which is characteristic of a replicative DNA polymerase. In Pyrococcus furiosus (strain ATCC 43587 / DSM 3638 / JCM 8422 / Vc1), this protein is DNA polymerase II large subunit (polC).